Reading from the N-terminus, the 453-residue chain is Cholesterol 7-desaturase nvd (453 aa).

Residues 53–73 (IVEYILILTLMFAFSAILYVI) traverse the membrane as a helical segment. The 104-residue stretch at 126-229 (WFAVAETREL…VVETDGAIWI (104 aa)) folds into the Rieske domain. Residues Cys167, His169, Cys187, and His190 each contribute to the [2Fe-2S] cluster site.

This sequence belongs to the cholesterol 7-desaturase family. [2Fe-2S] cluster serves as cofactor.

The protein resides in the membrane. The enzyme catalyses cholesterol + NADPH + O2 + H(+) = 7-dehydrocholesterol + NADP(+) + 2 H2O. It carries out the reaction cholesterol + NADH + O2 + H(+) = 7-dehydrocholesterol + NAD(+) + 2 H2O. The protein operates within steroid hormone biosynthesis; dafachronic acid biosynthesis. In terms of biological role, catalyzes the production of 7-dehydrocholesterol (7-DHC or cholesta-5,7-dien-3beta-ol) by inserting a double bond (desaturating) at the C7-C8 single bond of cholesterol. Essential regulator of steroid biosynthesis as this reaction is the first step in the synthesis of the steroid hormone Delta(7)-dafachronic acid. This Bombyx mori (Silk moth) protein is Cholesterol 7-desaturase nvd.